We begin with the raw amino-acid sequence, 205 residues long: Small ribosomal subunit protein uS2 (205 aa).

This sequence belongs to the universal ribosomal protein uS2 family.

The sequence is that of Small ribosomal subunit protein uS2 (rps2) from Aeropyrum pernix (strain ATCC 700893 / DSM 11879 / JCM 9820 / NBRC 100138 / K1).